A 198-amino-acid polypeptide reads, in one-letter code: Leucyl/phenylalanyl-tRNA--protein transferase (198 aa).

Belongs to the L/F-transferase family.

Its subcellular location is the cytoplasm. It carries out the reaction N-terminal L-lysyl-[protein] + L-leucyl-tRNA(Leu) = N-terminal L-leucyl-L-lysyl-[protein] + tRNA(Leu) + H(+). It catalyses the reaction N-terminal L-arginyl-[protein] + L-leucyl-tRNA(Leu) = N-terminal L-leucyl-L-arginyl-[protein] + tRNA(Leu) + H(+). The enzyme catalyses L-phenylalanyl-tRNA(Phe) + an N-terminal L-alpha-aminoacyl-[protein] = an N-terminal L-phenylalanyl-L-alpha-aminoacyl-[protein] + tRNA(Phe). Functionally, functions in the N-end rule pathway of protein degradation where it conjugates Leu, Phe and, less efficiently, Met from aminoacyl-tRNAs to the N-termini of proteins containing an N-terminal arginine or lysine. This Synechocystis sp. (strain ATCC 27184 / PCC 6803 / Kazusa) protein is Leucyl/phenylalanyl-tRNA--protein transferase.